The primary structure comprises 84 residues: Small ribosomal subunit protein uS17 (84 aa).

The protein belongs to the universal ribosomal protein uS17 family. In terms of assembly, part of the 30S ribosomal subunit.

Its function is as follows. One of the primary rRNA binding proteins, it binds specifically to the 5'-end of 16S ribosomal RNA. The chain is Small ribosomal subunit protein uS17 from Moorella thermoacetica (strain ATCC 39073 / JCM 9320).